The following is a 1128-amino-acid chain: Apoptosis-stimulating of p53 protein 2 (1128 aa).

The tract at residues 85–120 (PPNRDIVSGPRSQDPSVKRNGVKVPGEHRRKENGVN) is disordered. The interval 332-348 (NLPQQAVSAPSRVAAVG) is interaction with APPBP1. Residues 393–436 (MRSGAASQSKGSKAHPASPDWNPSNADLLPSQGSSVPQSAGTAL) are disordered. Residues 413–433 (WNPSNADLLPSQGSSVPQSAG) show a composition bias toward polar residues. A phosphoserine mark is found at serine 479, serine 555, serine 568, serine 571, and serine 575. Disordered regions lie at residues 549–596 (QARM…FPPA) and 654–705 (NPQQ…LPFL). Polar residues predominate over residues 562–574 (GQDQVLSPASKQE). Residues 654–669 (NPQQHPENIYSCSQGK) show a composition bias toward polar residues. The segment covering 684–693 (HESHENERIP) has biased composition (basic and acidic residues). 3 positions are modified to phosphoserine: serine 697, serine 713, and serine 736. Disordered stretches follow at residues 723–748 (KLSNAPRPLKKRSSITEPEGPNGPNI), 802–824 (SLVPEPLSPEDMGSASTENSDVP), and 870–907 (PPPPYPSGEPEVSEEDSARMRPPEITGQVSLPPGKRTN). An SH3-binding motif is present at residues 866–875 (YPPYPPPPYP). Residues 876–1128 (SGEPEVSEED…RIKPRQRSLA (253 aa)) are mediates interaction with APC2. 2 ANK repeats span residues 958–987 (EGITALHNAVCAGHTEIVKFLVQFGVNVNA) and 991–1020 (DGWTPLHCAASCNNVQVCKFLVESGAAVFA). Residues 1057 to 1119 (MNKGVIYALW…PRNLLGLYPR (63 aa)) enclose the SH3 domain.

This sequence belongs to the ASPP family. As to quaternary structure, interacts with P53/TP53; the interaction promotes pro-apoptotic activity. Interacts with BCL2. Interacts with protein phosphatase 1. Interacts with RELA NF-kappa-B subunit. This interaction probably prevents the activation of apoptosis, possibly by preventing its interaction with p53/TP53. Interacts with APC2 and APPBP1. Interacts with DDX42 (via the C-terminus); the interaction is not inhibited by TP53BP2 ubiquitination and is independent of p53/TP53.

The protein localises to the cytoplasm. The protein resides in the perinuclear region. It is found in the nucleus. Regulator that plays a central role in regulation of apoptosis and cell growth via its interactions with proteins such as TP53. Regulates p53/TP53 by enhancing the DNA binding and transactivation function of p53/TP53 on the promoters of proapoptotic genes in vivo. Inhibits the ability of APPBP1 to conjugate NEDD8 to CUL1, and thereby decreases APPBP1 ability to induce apoptosis. Impedes cell cycle progression at G2/M. Its apoptosis-stimulating activity is inhibited by its interaction with DDX42. The chain is Apoptosis-stimulating of p53 protein 2 (Tp53bp2) from Mus musculus (Mouse).